The primary structure comprises 726 residues: Dipeptidyl-peptidase 5 (726 aa).

The first 19 residues, 1-19 (MAPAKWLIASLAFASTGLA), serve as a signal peptide directing secretion. N-linked (GlcNAc...) asparagine glycosylation is found at Asn96 and Asn252. The disordered stretch occupies residues 268–292 (VAEPINKRNGPRTPHGIEGASSSPV). N-linked (GlcNAc...) asparagine glycosylation is present at Asn485. Catalysis depends on Ser558, which acts as the Charge relay system. Asn605 is a glycosylation site (N-linked (GlcNAc...) asparagine). Active-site charge relay system residues include Asp641 and His673. An N-linked (GlcNAc...) asparagine glycan is attached at Asn699.

The protein belongs to the peptidase S9C family.

It localises to the secreted. Its function is as follows. Extracellular dipeptidyl-peptidase which removes N-terminal dipeptides sequentially from polypeptides having unsubstituted N-termini. Contributes to pathogenicity. The chain is Dipeptidyl-peptidase 5 (DPP5) from Arthroderma otae (strain ATCC MYA-4605 / CBS 113480) (Microsporum canis).